We begin with the raw amino-acid sequence, 95 residues long: Aspartyl/glutamyl-tRNA(Asn/Gln) amidotransferase subunit C (95 aa).

This sequence belongs to the GatC family. In terms of assembly, heterotrimer of A, B and C subunits.

It catalyses the reaction L-glutamyl-tRNA(Gln) + L-glutamine + ATP + H2O = L-glutaminyl-tRNA(Gln) + L-glutamate + ADP + phosphate + H(+). The catalysed reaction is L-aspartyl-tRNA(Asn) + L-glutamine + ATP + H2O = L-asparaginyl-tRNA(Asn) + L-glutamate + ADP + phosphate + 2 H(+). Functionally, allows the formation of correctly charged Asn-tRNA(Asn) or Gln-tRNA(Gln) through the transamidation of misacylated Asp-tRNA(Asn) or Glu-tRNA(Gln) in organisms which lack either or both of asparaginyl-tRNA or glutaminyl-tRNA synthetases. The reaction takes place in the presence of glutamine and ATP through an activated phospho-Asp-tRNA(Asn) or phospho-Glu-tRNA(Gln). The protein is Aspartyl/glutamyl-tRNA(Asn/Gln) amidotransferase subunit C of Trichlorobacter lovleyi (strain ATCC BAA-1151 / DSM 17278 / SZ) (Geobacter lovleyi).